Reading from the N-terminus, the 564-residue chain is Eukaryotic translation initiation factor 3 subunit L (564 aa).

S2 bears the N-acetylserine mark. Position 21 is a phosphoserine (S21). The PCI domain maps to 331–537 (DAIRVFANIL…IHIADTKVAR (207 aa)). N6-acetyllysine occurs at positions 465 and 549.

Component of the eukaryotic translation initiation factor 3 (eIF-3) complex, which is composed of 13 subunits: EIF3A, EIF3B, EIF3C, EIF3D, EIF3E, EIF3F, EIF3G, EIF3H, EIF3I, EIF3J, EIF3K, EIF3L and EIF3M. The eIF-3 complex appears to include 3 stable modules: module A is composed of EIF3A, EIF3B, EIF3G and EIF3I; module B is composed of EIF3F, EIF3H, and EIF3M; and module C is composed of EIF3C, EIF3D, EIF3E, EIF3K and EIF3L. EIF3C of module C binds EIF3B of module A and EIF3H of module B, thereby linking the three modules. EIF3J is a labile subunit that binds to the eIF-3 complex via EIF3B. The eIF-3 complex interacts with RPS6KB1 under conditions of nutrient depletion. Mitogenic stimulation leads to binding and activation of a complex composed of MTOR and RPTOR, leading to phosphorylation and release of RPS6KB1 and binding of EIF4B to eIF-3. Interacts with RRN3.

The protein resides in the cytoplasm. Component of the eukaryotic translation initiation factor 3 (eIF-3) complex, which is required for several steps in the initiation of protein synthesis. The eIF-3 complex associates with the 40S ribosome and facilitates the recruitment of eIF-1, eIF-1A, eIF-2:GTP:methionyl-tRNAi and eIF-5 to form the 43S pre-initiation complex (43S PIC). The eIF-3 complex stimulates mRNA recruitment to the 43S PIC and scanning of the mRNA for AUG recognition. The eIF-3 complex is also required for disassembly and recycling of post-termination ribosomal complexes and subsequently prevents premature joining of the 40S and 60S ribosomal subunits prior to initiation. The eIF-3 complex specifically targets and initiates translation of a subset of mRNAs involved in cell proliferation, including cell cycling, differentiation and apoptosis, and uses different modes of RNA stem-loop binding to exert either translational activation or repression. In terms of biological role, (Microbial infection) In case of FCV infection, plays a role in the ribosomal termination-reinitiation event leading to the translation of VP2. This chain is Eukaryotic translation initiation factor 3 subunit L, found in Homo sapiens (Human).